Consider the following 507-residue polypeptide: Cytochrome P450 4X1 (507 aa).

Residues 14–34 form a helical membrane-spanning segment; the sequence is LHLALVFCLALVLMQAVKLYL. Cys452 contacts heme.

It belongs to the cytochrome P450 family. The cofactor is heme. In terms of tissue distribution, expressed at high levels in brain, mainly in neurons in different regions, including brain stem, hippocampus, cortex and cerebellum. Also expressed in cerebral vasculature. Not detected in kidney, nor liver.

The protein resides in the endoplasmic reticulum membrane. It is found in the microsome membrane. The enzyme catalyses N-(5Z,8Z,11Z,14Z-eicosatetraenoyl)-ethanolamine + reduced [NADPH--hemoprotein reductase] + O2 = N-(14,15-epoxy-5Z,8Z,11Z-eicosatrienoyl)-ethanolamine + oxidized [NADPH--hemoprotein reductase] + H2O + H(+). Its function is as follows. A cytochrome P450 monooxygenase that selectively catalyzes the epoxidation of the last double bond of the arachidonoyl moiety of anandamide, potentially modulating endocannabinoid signaling. Has no hydroxylase activity toward various fatty acids, steroids and prostaglandins. Mechanistically, uses molecular oxygen inserting one oxygen atom into a substrate, and reducing the second into a water molecule, with two electrons provided by NADPH via cytochrome P450 reductase (CPR; NADPH-ferrihemoprotein reductase). This is Cytochrome P450 4X1 from Rattus norvegicus (Rat).